Consider the following 263-residue polypeptide: Troponin T, fast skeletal muscle isoforms (263 aa).

Positions Met-1–Glu-26 are enriched in acidic residues. Disordered stretches follow at residues Met-1–Ile-66, Arg-107–Glu-188, and Asp-243–Lys-263. An N-acetylserine modification is found at Ser-2. 3 stretches are compositionally biased toward basic and acidic residues: residues Pro-56–Ile-66, Arg-107–Lys-149, and Thr-177–Glu-188. Residues Lys-247–Lys-263 show a composition bias toward basic residues.

It belongs to the troponin T family.

Its function is as follows. Troponin T is the tropomyosin-binding subunit of troponin, the thin filament regulatory complex which confers calcium-sensitivity to striated muscle actomyosin ATPase activity. The protein is Troponin T, fast skeletal muscle isoforms (TNNT3) of Gallus gallus (Chicken).